Here is a 186-residue protein sequence, read N- to C-terminus: ATP synthase subunit b (186 aa).

Residues 25–45 form a helical membrane-spanning segment; it reads IVWSVVCVAIIAVVFYKYVIP.

Belongs to the ATPase B chain family. In terms of assembly, F-type ATPases have 2 components, F(1) - the catalytic core - and F(0) - the membrane proton channel. F(1) has five subunits: alpha(3), beta(3), gamma(1), delta(1), epsilon(1). F(0) has three main subunits: a(1), b(2) and c(10-14). The alpha and beta chains form an alternating ring which encloses part of the gamma chain. F(1) is attached to F(0) by a central stalk formed by the gamma and epsilon chains, while a peripheral stalk is formed by the delta and b chains.

It localises to the cell membrane. F(1)F(0) ATP synthase produces ATP from ADP in the presence of a proton or sodium gradient. F-type ATPases consist of two structural domains, F(1) containing the extramembraneous catalytic core and F(0) containing the membrane proton channel, linked together by a central stalk and a peripheral stalk. During catalysis, ATP synthesis in the catalytic domain of F(1) is coupled via a rotary mechanism of the central stalk subunits to proton translocation. Functionally, component of the F(0) channel, it forms part of the peripheral stalk, linking F(1) to F(0). The protein is ATP synthase subunit b of Nocardia farcinica (strain IFM 10152).